The primary structure comprises 272 residues: Undecaprenyl-diphosphatase (272 aa).

7 helical membrane-spanning segments follow: residues 22–42 (FLPV…GFTG), 45–65 (AETF…VVFW), 92–112 (SHII…HDVI), 118–138 (PQSV…AEIL), 189–209 (YTAS…ASGL), 228–248 (VGFV…LALI), and 251–271 (ISFI…YWVF).

This sequence belongs to the UppP family.

The protein localises to the cell inner membrane. The enzyme catalyses di-trans,octa-cis-undecaprenyl diphosphate + H2O = di-trans,octa-cis-undecaprenyl phosphate + phosphate + H(+). In terms of biological role, catalyzes the dephosphorylation of undecaprenyl diphosphate (UPP). Confers resistance to bacitracin. The chain is Undecaprenyl-diphosphatase from Photorhabdus laumondii subsp. laumondii (strain DSM 15139 / CIP 105565 / TT01) (Photorhabdus luminescens subsp. laumondii).